Here is a 104-residue protein sequence, read N- to C-terminus: Complex III assembly factor LYRM7 (104 aa).

Residues 21 to 48 (VFQNDHRALEAARQRINEEFKKNKRECS) adopt a coiled-coil conformation.

Belongs to the complex I LYR family. Interacts with UQCRFS1.

It is found in the mitochondrion matrix. Its function is as follows. Assembly factor required for Rieske Fe-S protein UQCRFS1 incorporation into the cytochrome b-c1 (CIII) complex. Functions as a chaperone, binding to this subunit within the mitochondrial matrix and stabilizing it prior to its translocation and insertion into the late CIII dimeric intermediate within the mitochondrial inner membrane. The sequence is that of Complex III assembly factor LYRM7 (lyrm7) from Xenopus laevis (African clawed frog).